The chain runs to 24 residues: Chlorate reductase subunit beta (24 aa).

Heterotrimer of alpha, beta and gamma subunits. [3Fe-4S] cluster serves as cofactor. Requires [4Fe-4S] cluster as cofactor.

It localises to the cytoplasm. Functionally, electron transfer subunit of the chlorate reductase. This is Chlorate reductase subunit beta from Stutzerimonas chloritidismutans (Pseudomonas chloritidismutans).